The chain runs to 101 residues: Protein SSXA1 (101 aa).

The KRAB-related domain maps to 19-83 (ETCQAFEDIS…ERVTKSVLSD (65 aa)). The interval 73–101 (KERVTKSVLSDSDEVSSHESQDKRKNPVV) is disordered. Residues 87 to 101 (VSSHESQDKRKNPVV) are compositionally biased toward basic and acidic residues.

The protein belongs to the SSX family. In terms of tissue distribution, specifically expressed in testis (at protein level). Not detected in other tissues tested (at protein level).

The protein localises to the nucleus. Its function is as follows. Could act as a modulator of transcription. The sequence is that of Protein SSXA1 from Mus musculus (Mouse).